A 159-amino-acid polypeptide reads, in one-letter code: Transcription elongation factor GreA (159 aa).

Residues 45-67 (NAEYHEARKEQSFVEGKIRELQL) are a coiled coil.

The protein belongs to the GreA/GreB family.

In terms of biological role, necessary for efficient RNA polymerase transcription elongation past template-encoded arresting sites. The arresting sites in DNA have the property of trapping a certain fraction of elongating RNA polymerases that pass through, resulting in locked ternary complexes. Cleavage of the nascent transcript by cleavage factors such as GreA or GreB allows the resumption of elongation from the new 3'terminus. GreA releases sequences of 2 to 3 nucleotides. The protein is Transcription elongation factor GreA of Neorickettsia sennetsu (strain ATCC VR-367 / Miyayama) (Ehrlichia sennetsu).